The sequence spans 313 residues: MARKLKAAIIGSGNIGTDLMIKILRHGQNIEMGAMVGIDPASDGLARAARMGVATTHEGVEGLTRLDVFKDIDFVFDATSAGAHVKNDAFLRTLKPGIRMIDLTPAAIGPYCIPVVNGEDHLDALNVNMVTCGGQATIPMVAAVSRVAKVHYGEIVASISSKSAGPGTRANIDEFTETTSKAIEVVGGAAKGKAIIVLNPAEPPLIMRDTVYTLSDFASEDAIAESVERMAADVQAYVPGYRLKQKVQFDRIEASHPINIPGVGPRMSGLKTSIFLEVEGAAHYLPAYAGNLDIMTSAGLRTAEHMATRMLAA.

12 to 15 contacts NAD(+); sequence SGNI. The active-site Acyl-thioester intermediate is the cysteine 132. Residues 163–171 and asparagine 291 contribute to the NAD(+) site; that span reads SAGPGTRAN.

This sequence belongs to the acetaldehyde dehydrogenase family.

The catalysed reaction is acetaldehyde + NAD(+) + CoA = acetyl-CoA + NADH + H(+). The chain is Acetaldehyde dehydrogenase (bphG) from Burkholderia cepacia (Pseudomonas cepacia).